A 230-amino-acid polypeptide reads, in one-letter code: E3 ubiquitin-protein ligase RNF114 (230 aa).

The RING-type zinc-finger motif lies at 31-70 (CPVCLEVYEKPVQVPCGHVFCSACLQECLKPKKPVCGVCR). Zn(2+) is bound by residues C93 and C96. Residues 93–112 (CHGCRKNFFLSKIRAHVATC) form a C2HC RNF-type zinc finger. Residue K104 is modified to N6-acetyllysine. Residues H108 and C112 each coordinate Zn(2+). Position 114 is an N6-acetyllysine (K114).

As to quaternary structure, interacts with XAF1, the interaction increases XAF1 stability and proapoptotic effects, and may regulate IFN signaling. Autoubiquitinated. Polyubiquitinated in the presence of E2 enzymes UBE2D1, UBE2D2 and UBE2D3, but only monoubiquitinated in the presence of UBE2E1.

The protein localises to the cytoplasm. The protein resides in the nucleus. It carries out the reaction S-ubiquitinyl-[E2 ubiquitin-conjugating enzyme]-L-cysteine + [acceptor protein]-L-lysine = [E2 ubiquitin-conjugating enzyme]-L-cysteine + N(6)-ubiquitinyl-[acceptor protein]-L-lysine.. The protein operates within protein modification; protein ubiquitination. In terms of biological role, E3 ubiquitin-protein ligase that promotes the ubiquitination of various substrates. In turn, participates in the regulation of many biological processes including cell cycle, apoptosis, osteoclastogenesis as well as innate or adaptive immunity. Acts as negative regulator of NF-kappa-B-dependent transcription by promoting the ubiquitination and stabilization of the NF-kappa-B inhibitor TNFAIP3. May promote the ubiquitination of TRAF6 as well. Also acts as a negative regulator of T-cell activation. Inhibits cellular dsRNA responses and interferon production by targeting MAVS component for proteasomal degradation. Ubiquitinates the CDK inhibitor CDKN1A leading to its degradationand probably also CDKN1B and CDKN1C. This activity stimulates cell cycle G1-to-S phase transition and suppresses cellular senescence. May play a role in spermatogenesis. This is E3 ubiquitin-protein ligase RNF114 (RNF114) from Bos taurus (Bovine).